Here is a 142-residue protein sequence, read N- to C-terminus: Large ribosomal subunit protein uL11 (142 aa).

This sequence belongs to the universal ribosomal protein uL11 family. As to quaternary structure, part of the ribosomal stalk of the 50S ribosomal subunit. Interacts with L10 and the large rRNA to form the base of the stalk. L10 forms an elongated spine to which L12 dimers bind in a sequential fashion forming a multimeric L10(L12)X complex. In terms of processing, one or more lysine residues are methylated.

Forms part of the ribosomal stalk which helps the ribosome interact with GTP-bound translation factors. The sequence is that of Large ribosomal subunit protein uL11 from Shewanella amazonensis (strain ATCC BAA-1098 / SB2B).